The chain runs to 129 residues: Glycine cleavage system H protein (129 aa).

Positions leucine 24–lysine 106 constitute a Lipoyl-binding domain. Residue lysine 65 is modified to N6-lipoyllysine.

The protein belongs to the GcvH family. In terms of assembly, the glycine cleavage system is composed of four proteins: P, T, L and H. Requires (R)-lipoate as cofactor.

The glycine cleavage system catalyzes the degradation of glycine. The H protein shuttles the methylamine group of glycine from the P protein to the T protein. This chain is Glycine cleavage system H protein, found in Prochlorococcus marinus (strain MIT 9215).